Here is a 270-residue protein sequence, read N- to C-terminus: Pyrroline-5-carboxylate reductase (270 aa).

It belongs to the pyrroline-5-carboxylate reductase family.

It localises to the cytoplasm. It catalyses the reaction L-proline + NADP(+) = (S)-1-pyrroline-5-carboxylate + NADPH + 2 H(+). It carries out the reaction L-proline + NAD(+) = (S)-1-pyrroline-5-carboxylate + NADH + 2 H(+). It participates in amino-acid biosynthesis; L-proline biosynthesis; L-proline from L-glutamate 5-semialdehyde: step 1/1. In terms of biological role, catalyzes the reduction of 1-pyrroline-5-carboxylate (PCA) to L-proline. In Corynebacterium melassecola, this protein is Pyrroline-5-carboxylate reductase.